A 130-amino-acid polypeptide reads, in one-letter code: Large ribosomal subunit protein bL12 (130 aa).

Belongs to the bacterial ribosomal protein bL12 family. Homodimer. Part of the ribosomal stalk of the 50S ribosomal subunit. Forms a multimeric L10(L12)X complex, where L10 forms an elongated spine to which 2 to 4 L12 dimers bind in a sequential fashion. Binds GTP-bound translation factors.

Its function is as follows. Forms part of the ribosomal stalk which helps the ribosome interact with GTP-bound translation factors. Is thus essential for accurate translation. This chain is Large ribosomal subunit protein bL12, found in Prochlorococcus marinus (strain SARG / CCMP1375 / SS120).